A 100-amino-acid chain; its full sequence is Small ribosomal subunit protein uS14c (100 aa).

Belongs to the universal ribosomal protein uS14 family. Part of the 30S ribosomal subunit.

The protein localises to the plastid. Its subcellular location is the chloroplast. Its function is as follows. Binds 16S rRNA, required for the assembly of 30S particles. This Coffea arabica (Arabian coffee) protein is Small ribosomal subunit protein uS14c.